Consider the following 313-residue polypeptide: Porphobilinogen deaminase (313 aa).

The residue at position 241 (Cys-241) is an S-(dipyrrolylmethanemethyl)cysteine.

It belongs to the HMBS family. Monomer. Dipyrromethane is required as a cofactor.

It carries out the reaction 4 porphobilinogen + H2O = hydroxymethylbilane + 4 NH4(+). The protein operates within porphyrin-containing compound metabolism; protoporphyrin-IX biosynthesis; coproporphyrinogen-III from 5-aminolevulinate: step 2/4. It functions in the pathway porphyrin-containing compound metabolism; chlorophyll biosynthesis. Its function is as follows. Tetrapolymerization of the monopyrrole PBG into the hydroxymethylbilane pre-uroporphyrinogen in several discrete steps. In Chlorobium chlorochromatii (strain CaD3), this protein is Porphobilinogen deaminase.